The following is a 151-amino-acid chain: Transcriptional regulator MraZ (151 aa).

SpoVT-AbrB domains follow at residues 5-51 (AHEL…PVAE) and 81-124 (AEIL…GREQ).

This sequence belongs to the MraZ family. As to quaternary structure, forms oligomers.

Its subcellular location is the cytoplasm. The protein resides in the nucleoid. The protein is Transcriptional regulator MraZ of Neisseria gonorrhoeae (strain ATCC 700825 / FA 1090).